The primary structure comprises 486 residues: UDP-N-acetylmuramate--L-alanine ligase (486 aa).

Residue 132 to 138 participates in ATP binding; sequence GTHGKTT.

The protein belongs to the MurCDEF family.

The protein localises to the cytoplasm. It catalyses the reaction UDP-N-acetyl-alpha-D-muramate + L-alanine + ATP = UDP-N-acetyl-alpha-D-muramoyl-L-alanine + ADP + phosphate + H(+). The protein operates within cell wall biogenesis; peptidoglycan biosynthesis. In terms of biological role, cell wall formation. This is UDP-N-acetylmuramate--L-alanine ligase from Halorhodospira halophila (strain DSM 244 / SL1) (Ectothiorhodospira halophila (strain DSM 244 / SL1)).